The sequence spans 325 residues: MVAELEFEKPLVELRRKIQELKEFMKTADVDLSSEIEKLEARLTKLENEVYANLTPWDRVQIARHPQRPTTLDYIERLFTNFFECHGDRCFGDDEAIVGGIADYDGLPVTVIGHQRGKDTKENLRRNFGMPHPEGYRKALRLMKQAEKFSRPIICFIDTKGAYPGKAAEERGQSEAIARNLFEMAGLTVPVVCIVIGEGGSGGALALGVGNHIHMLENSTYSVISPEGAAAILWKDASLAQRAAETMKITAHDLKTLGVIDEIIPEVKGGAHRNADEQAKEIDRVLRASLKQLLALDGEALVEQRYEKFKQMGQVSFLQETIRAR.

One can recognise a CoA carboxyltransferase C-terminal domain in the interval Glu-35–Gln-292.

Belongs to the AccA family. As to quaternary structure, acetyl-CoA carboxylase is a heterohexamer composed of biotin carboxyl carrier protein (AccB), biotin carboxylase (AccC) and two subunits each of ACCase subunit alpha (AccA) and ACCase subunit beta (AccD).

It localises to the cytoplasm. The catalysed reaction is N(6)-carboxybiotinyl-L-lysyl-[protein] + acetyl-CoA = N(6)-biotinyl-L-lysyl-[protein] + malonyl-CoA. It participates in lipid metabolism; malonyl-CoA biosynthesis; malonyl-CoA from acetyl-CoA: step 1/1. Its function is as follows. Component of the acetyl coenzyme A carboxylase (ACC) complex. First, biotin carboxylase catalyzes the carboxylation of biotin on its carrier protein (BCCP) and then the CO(2) group is transferred by the carboxyltransferase to acetyl-CoA to form malonyl-CoA. In Geobacillus thermodenitrificans (strain NG80-2), this protein is Acetyl-coenzyme A carboxylase carboxyl transferase subunit alpha.